A 154-amino-acid chain; its full sequence is uncharacterized protein (154 aa).

The interval 91-154 is disordered; sequence PSEESWGCRQ…WGSPQPSRGA (64 aa). Polar residues predominate over residues 134–154; that stretch reads SRDTSPLGGQSWGSPQPSRGA.

This is an uncharacterized protein from Homo sapiens (Human).